The chain runs to 146 residues: UPF0306 protein CKO_04548 (146 aa).

Belongs to the UPF0306 family.

This is UPF0306 protein CKO_04548 from Citrobacter koseri (strain ATCC BAA-895 / CDC 4225-83 / SGSC4696).